We begin with the raw amino-acid sequence, 220 residues long: RPA-interacting protein B (220 aa).

Residues 1 to 45 (MEAERRHRALYKGTTPPWKETYRKRCVERLKSNRSKLLDKFRQVG) form an interaction with importin beta region. Positions 49–165 (HGGVGGSFLV…QCGVYINTQS (117 aa)) are interaction with RPA1. The RIP-type zinc-finger motif lies at 138–213 (CPVCNRNYLT…ASLFMSCQEC (76 aa)).

As to quaternary structure, interacts directly with the RPA1 subunit of RPA complex. Interacts with importin beta, but not with importin alpha. Forms a complex with the RPA complex and importin beta, which is dissociated by Ran-GTP.

The protein resides in the nucleus. Mediates the import of RPA complex into the nucleus, via its interaction with importin beta. This Xenopus laevis (African clawed frog) protein is RPA-interacting protein B (rpain-b).